Here is a 371-residue protein sequence, read N- to C-terminus: Maltose/maltodextrin import ATP-binding protein MalK (371 aa).

An ABC transporter domain is found at 4–234 (VQLQNVTKAW…PADRFVAGFI (231 aa)). Residue 36–43 (GPSGCGKS) coordinates ATP.

It belongs to the ABC transporter superfamily. Maltooligosaccharide importer (TC 3.A.1.1.1) family. As to quaternary structure, the complex is composed of two ATP-binding proteins (MalK), two transmembrane proteins (MalG and MalK) and a solute-binding protein (MalE).

It is found in the cell inner membrane. The catalysed reaction is D-maltose(out) + ATP + H2O = D-maltose(in) + ADP + phosphate + H(+). In terms of biological role, part of the ABC transporter complex MalEFGK involved in maltose/maltodextrin import. Responsible for energy coupling to the transport system. This chain is Maltose/maltodextrin import ATP-binding protein MalK, found in Escherichia coli O6:H1 (strain CFT073 / ATCC 700928 / UPEC).